A 570-amino-acid chain; its full sequence is MITIEREAMEFDVVIVGAGPAGLSAAIKIRQLAIENNLPDLSVCVVEKGSEVGAHILSGAVLEPRAINELFPNWKEEGAPLNVPVTEDKTYFLMSDEKSQEAPHWMVPKTMHNDGNYVISLGNVVRWLGQKAEELEVSIFPGFAAAEILYHADGTVKGIQTGDMGIGKDGEPTHNFAPGYELHAKYTLFAEGCRGHLGKRLINKFNLDQDADPQHYGIGIKELWEIDPAKHKPGLVMHGSGWPLSETGSSGGWWLYHAENNQVTLGMIVDLSYENPHMFPFMEMQRWKTHPLIKQYLEGGKRISYGARAVVKGGLNSLPKLTFPGGCLIGDDAGFLNFAKIKGSHTAMKSGMLCGEAVFEAIARGVDKGGDLAIARVVEGEDLFDKELTTYTQKFDKSWLKEELHRSRNFGPAMHKFGLWIGGAFNFVDQNIFKVPFTLHDLQPDYSALKTQDQATFKPNYPKPDGKLTFDRLSSVFVSNTVHEENQPSHLKLTDASIPVAVNLPRWDEPAQRYCPAGVYEIVDEGEGNKRFQINAANCVHCKTCDIKDPSQNITWVTPEGGGGPNYPNM.

Residue 13 to 27 coordinates FAD; it reads VVIVGAGPAGLSAAI. [4Fe-4S] cluster-binding residues include Cys-515, Cys-539, Cys-542, and Cys-545. The region spanning 530–559 is the 4Fe-4S ferredoxin-type domain; sequence KRFQINAANCVHCKTCDIKDPSQNITWVTP.

Requires [4Fe-4S] cluster as cofactor. The cofactor is FAD.

The enzyme catalyses a ubiquinone + reduced [electron-transfer flavoprotein] = a ubiquinol + oxidized [electron-transfer flavoprotein] + H(+). Its function is as follows. Accepts electrons from ETF and reduces ubiquinone. The protein is Probable electron transfer flavoprotein-ubiquinone oxidoreductase (etfD) of Acinetobacter baylyi (strain ATCC 33305 / BD413 / ADP1).